The following is a 294-amino-acid chain: Nucleotide-binding protein Smlt1108 (294 aa).

16–23 (GLSGSGKS) is an ATP binding site. 69–72 (DVRG) is a GTP binding site.

Belongs to the RapZ-like family.

Functionally, displays ATPase and GTPase activities. The sequence is that of Nucleotide-binding protein Smlt1108 from Stenotrophomonas maltophilia (strain K279a).